A 1453-amino-acid polypeptide reads, in one-letter code: Collagen alpha-1(I) chain (1453 aa).

The N-terminal stretch at 1–22 (MFSFVDLRLLLLLGATALLTHG) is a signal peptide. Residues 23-151 (QEDIPEVSCI…PPGLGGNFAS (129 aa)) constitute a propeptide, N-terminal propeptide. The VWFC domain occupies 29-87 (VSCIHNGLRVPNGETWKPEVCLICICHNGTAVCDDVQCNEELDCPNPQRREGECCAFCP). A glycan (N-linked (GlcNAc...) asparagine) is linked at asparagine 56. The interval 94–1210 (NSEDVGVEGP…GGRYYRADDA (1117 aa)) is disordered. 2 stretches are compositionally biased toward pro residues: residues 109 to 118 (PQGPRGPVGP) and 128 to 143 (PGLP…PGPP). The interval 152–167 (QMSYGYDEKSAGVSVP) is nonhelical region (N-terminal). Allysine is present on lysine 160. Serine 161 carries the post-translational modification Phosphoserine. Positions 168 to 1181 (GPMGPSGPRG…PGPPGPPGPP (1014 aa)) are triple-helical region. Residues proline 179, proline 182, proline 185, proline 194, proline 197, proline 200, proline 215, proline 230, proline 236, proline 245, and proline 251 each carry the 4-hydroxyproline modification. Gly residues predominate over residues 198-207 (GEPGGSGPMG). Residues 218–232 (NGDDGEAGKPGRPGE) are compositionally biased toward basic and acidic residues. Lysine 254 carries the post-translational modification 5-hydroxylysine; alternate. An O-linked (Gal...) hydroxylysine; alternate glycan is attached at lysine 254. Serine 260 bears the Phosphoserine mark. Positions 268-284 (DAGPAGPKGEPGSPGEN) are enriched in low complexity. 5 positions are modified to 4-hydroxyproline: proline 278, proline 281, proline 287, proline 296, and proline 302. Residues 307 to 320 (TAGARGNDGAVGAA) show a composition bias toward low complexity. Residues 322–334 (PPGPTGPTGPPGF) show a composition bias toward pro residues. 4-hydroxyproline is present on residues proline 323, proline 332, proline 335, proline 362, proline 365, proline 377, proline 383, proline 392, proline 398, proline 401, and proline 416. The span at 368–407 (AGAAGPAGNPGADGQPGAKGANGAPGIAGAPGFPGARGPS) shows a compositional bias: low complexity. Lysine 419 is subject to 5-hydroxylysine. Residues proline 425, proline 428, proline 440, proline 449, proline 464, proline 470, proline 479, and proline 485 each carry the 4-hydroxyproline modification. Gly residues predominate over residues 474–483 (GERGGPGSRG). Lysine 494 carries the 5-hydroxylysine modification. The segment covering 499–515 (ERGAPGPAGPKGSPGEA) has biased composition (low complexity). 4-hydroxyproline is present on residues proline 503, proline 512, proline 518, proline 524, proline 533, proline 536, proline 545, proline 554, proline 560, proline 572, proline 581, proline 590, proline 593, proline 611, proline 629, proline 635, proline 641, proline 647, proline 653, proline 659, proline 671, proline 680, proline 692, proline 704, proline 707, proline 713, proline 719, and proline 728. Residues 527-566 (KGLTGSPGSPGPDGKTGPPGPAGQDGRPGPAGPPGARGQA) show a composition bias toward low complexity. Residues 623–650 (QGPAGSPGFQGLPGPAGPPGEAGKPGEQ) show a composition bias toward low complexity. 2 stretches are compositionally biased toward low complexity: residues 685–695 (PRGNNGAPGND) and 703–716 (APGA…PGLQ). A Cell attachment site motif is present at residues 734-736 (RGD). Lysine 740 carries the post-translational modification 5-hydroxylysine. A 4-hydroxyproline mark is found at proline 746, proline 761, and proline 767. The residue at position 776 (serine 776) is a Phosphoserine. A 4-hydroxyproline mark is found at proline 788, proline 797, proline 806, proline 812, proline 830, proline 839, and proline 848. Low complexity predominate over residues 800-815 (AGFAGPPGADGQPGAK). A compositionally biased stretch (pro residues) spans 829–841 (PPGPAGPAGPPGP). Over residues 842–872 (IGNVGAPGPKGPRGAAGPPGATGFPGAAGRV) the composition is skewed to low complexity. Position 851 is a 5-hydroxylysine (lysine 851). Proline 860 and proline 866 each carry 4-hydroxyproline. The residue at position 874 (proline 874) is a 3-hydroxyproline. A 4-hydroxyproline mark is found at proline 875, proline 884, proline 887, proline 908, proline 917, proline 926, proline 935, proline 953, proline 962, proline 965, proline 971, proline 986, proline 992, proline 998, proline 1007, and proline 1013. The span at 901-910 (ETGPAGRPGE) shows a compositional bias: low complexity. Residues 920-935 (AGEKGSPGADGPAGSP) are compositionally biased toward low complexity. Residues 985–995 (PPGPMGPPGLA) show a composition bias toward pro residues. Positions 997-1012 (PPGESGREGSPGAEGS) are enriched in low complexity. 5-hydroxylysine is present on lysine 1022. Residues 1031-1046 (AGPPGAPGAPGAPGPV) show a composition bias toward pro residues. Residues proline 1034, proline 1037, and proline 1040 each carry the 4-hydroxyproline modification. Residues 1067 to 1081 (IGPAGARGPAGPQGP) show a composition bias toward low complexity. Positions 1082-1084 (RGD) match the Cell attachment site motif. Positions 1082-1096 (RGDKGETGEQGDRGI) are enriched in basic and acidic residues. Lysine 1085 bears the 5-hydroxylysine mark. 5-hydroxylysine; alternate is present on lysine 1097. A glycan (O-linked (Gal...) hydroxylysine; alternate) is linked at lysine 1097. Residues 1102-1148 (FSGLQGPPGSPGSPGEQGPSGASGPAGPRGPPGSAGSPGKDGLNGLP) are compositionally biased toward low complexity. 4-hydroxyproline is present on residues proline 1109, proline 1112, proline 1115, proline 1133, and proline 1148. 3-hydroxyproline is present on proline 1153. At proline 1154 the chain carries 4-hydroxyproline. Residues 1166–1181 (AGPPGPPGPPGPPGPP) show a composition bias toward pro residues. A 3-hydroxyproline modification is found at proline 1168. At proline 1169 the chain carries 4-hydroxyproline. Proline 1171 bears the 3-hydroxyproline mark. Residue proline 1172 is modified to 4-hydroxyproline. A 3-hydroxyproline modification is found at proline 1174. Residues proline 1175, proline 1178, and proline 1181 each carry the 4-hydroxyproline modification. The segment at 1182–1207 (SGGYDFSFLPQPPQEKSQDGGRYYRA) is nonhelical region (C-terminal). Lysine 1197 carries the allysine modification. Residues 1197-1210 (KSQDGGRYYRADDA) show a composition bias toward basic and acidic residues. A propeptide spans 1208–1453 (DDANVVRDRD…GLDIGPACFV (246 aa)) (C-terminal propeptide). The Fibrillar collagen NC1 domain occupies 1218-1453 (LEVDTTLKSL…GLDIGPACFV (236 aa)). 3 disulfide bridges follow: cysteine 1248–cysteine 1280, cysteine 1288–cysteine 1451, and cysteine 1359–cysteine 1404. Residues aspartate 1266, asparagine 1268, glutamine 1269, cysteine 1271, and aspartate 1274 each contribute to the Ca(2+) site. Residue asparagine 1354 is glycosylated (N-linked (GlcNAc...) asparagine).

It belongs to the fibrillar collagen family. In terms of assembly, trimers of one alpha 2(I) and two alpha 1(I) chains. Interacts with MRC2. Interacts with TRAM2. Interacts with MFAP4 in a Ca (2+)-dependent manner. Post-translationally, contains mostly 4-hydroxyproline. Proline residues at the third position of the tripeptide repeating unit (G-X-Y) are hydroxylated in some or all of the chains. Contains 3-hydroxyproline at a few sites. This modification occurs on the first proline residue in the sequence motif Gly-Pro-Hyp, where Hyp is 4-hydroxyproline. In terms of processing, lysine residues at the third position of the tripeptide repeating unit (G-X-Y) are 5-hydroxylated in some or all of the chains. Post-translationally, O-glycosylated on hydroxylated lysine residues. The O-linked glycan consists of a Glc-Gal disaccharide. In terms of tissue distribution, forms the fibrils of tendon, ligaments and bones. In bones the fibrils are mineralized with calcium hydroxyapatite.

Its subcellular location is the secreted. The protein localises to the extracellular space. It localises to the extracellular matrix. Type I collagen is a member of group I collagen (fibrillar forming collagen). The protein is Collagen alpha-1(I) chain of Mus musculus (Mouse).